The primary structure comprises 662 residues: Hypoxia-inducible factor 3-alpha (662 aa).

The disordered stretch occupies residues 1 to 25 (MDWDQDRSSTELRKEKSRDAARSRR). Residues 12 to 65 (LRKEKSRDAARSRRSQETEVLYQLAHTLPFARGVSAHLDKASIMRLTISYLRMH) enclose the bHLH domain. Residues 75 to 98 (QVRKEGEPLDACYLKALEGFVMVL) form a nuclear localization signal region. 2 PAS domains span residues 80 to 150 (GEPL…PSLS) and 225 to 295 (PHPA…LSKG). Residues 228 to 272 (ASLEPPLGRGAFLSRHSLDMKFTYCDERIAEVAGYSPDDLIGCSA) form a nuclear export signal region. Residues 352-379 (EQTEQHTRRPPQLGTSSKKGIPGNSLDP) form a disordered region. Positions 410–413 (LRRL) match the LRRLL motif. Disordered stretches follow at residues 417 to 445 (ILDG…ADLP) and 459 to 480 (STAR…PDTP). A compositionally biased stretch (low complexity) spans 421–433 (PPTAATPSTPQAA). Residues 448–581 (LAVGLENAHR…SEDKGLELLE (134 aa)) form an ODD region. The NTAD stretch occupies residues 450–501 (VGLENAHRLSTARKNKTMETDLDIAQDPDTPDLEMLAPYISMDDDFQLNSSE). Residue Lys-463 forms a Glycyl lysine isopeptide (Lys-Gly) (interchain with G-Cter in ubiquitin) linkage. Residues 469 to 480 (TDLDIAQDPDTP) are compositionally biased toward acidic residues. The short motif at 485-492 (LAPYISMD) is the LAPYISMD element. Pro-487 carries the 4-hydroxyproline modification. The disordered stretch occupies residues 500–595 (SEQLPKVHRR…KRSPRLEPGS (96 aa)). A compositionally biased stretch (basic residues) spans 505–521 (KVHRRPPRTARRPRARS). Residue Lys-565 forms a Glycyl lysine isopeptide (Lys-Gly) (interchain with G-Cter in ubiquitin) linkage. The span at 572–584 (SEDKGLELLETKP) shows a compositional bias: basic and acidic residues.

In terms of assembly, interacts with ARNT, BAD, BCL2L2, EPAS1, HIF1A, MCL1 and VHL. In normoxia, hydroxylated on Pro-487 in the oxygen-dependent degradation domain (ODD) by PHD. The hydroxylated proline promotes interaction with VHL, initiating rapid ubiquitination and subsequent proteasomal degradation. Post-translationally, ubiquitinated; ubiquitination occurs in a VHL- and oxygen-dependent pathway and subsequently targeted for proteasomal degradation. Expressed in the perivenous zone of the liver. Expressed in all tissues examined during normoxia. Expressed in brain and lung. Expressed in periportal and perivenous hepatocytes and in endothelial cells of the central vein (at protein level). Highest expression seen in the cerebral cortex, hippocampus, and lung. Low expression in myocardial tissue and liver.

The protein localises to the nucleus. The protein resides in the cytoplasm. Its subcellular location is the nucleus speckle. It localises to the mitochondrion. Acts as a transcriptional regulator in adaptive response to low oxygen tension. Attenuates the ability of transcription factor HIF1A, EPAS1 and the HIF1A-ARNT complex to bind to hypoxia-responsive elements (HRE) located within the enhancer/promoter of hypoxia-inducible target genes and hence inhibits HRE-driven transcriptional activation. Functions as an inhibitor of angiogenesis in hypoxic cells of the cornea. Plays a role in the development of the cardiorespiratory system. May also be involved in apoptosis. May act as a tumor suppressor. This chain is Hypoxia-inducible factor 3-alpha, found in Rattus norvegicus (Rat).